A 178-amino-acid polypeptide reads, in one-letter code: MSEQNVARRYARALFNIAREQGTAGEFANGLEEVSRTLAENSDFRRVLYHQLIPVREKQKLIDTIFPDINPLLKNFLHLVLAKGRERALPEMAAQFRRLVDQAENILPVEVTSAITLREDILAGLKERLAGITRRNIRLSSRVNPELIGGVVIRLGDRVLDASVKKKLELLGEHLKRA.

The protein belongs to the ATPase delta chain family. In terms of assembly, F-type ATPases have 2 components, F(1) - the catalytic core - and F(0) - the membrane proton channel. F(1) has five subunits: alpha(3), beta(3), gamma(1), delta(1), epsilon(1). F(0) has three main subunits: a(1), b(2) and c(10-14). The alpha and beta chains form an alternating ring which encloses part of the gamma chain. F(1) is attached to F(0) by a central stalk formed by the gamma and epsilon chains, while a peripheral stalk is formed by the delta and b chains.

It is found in the cell membrane. Its function is as follows. F(1)F(0) ATP synthase produces ATP from ADP in the presence of a proton or sodium gradient. F-type ATPases consist of two structural domains, F(1) containing the extramembraneous catalytic core and F(0) containing the membrane proton channel, linked together by a central stalk and a peripheral stalk. During catalysis, ATP synthesis in the catalytic domain of F(1) is coupled via a rotary mechanism of the central stalk subunits to proton translocation. This protein is part of the stalk that links CF(0) to CF(1). It either transmits conformational changes from CF(0) to CF(1) or is implicated in proton conduction. The polypeptide is ATP synthase subunit delta (Moorella thermoacetica (strain ATCC 39073 / JCM 9320)).